A 166-amino-acid polypeptide reads, in one-letter code: uncharacterized protein (166 aa).

2 stretches are compositionally biased toward gly residues: residues 1 to 10 and 76 to 86; these read MNYGNNGGGQ and YRGGGGGGGGN. Residues 1 to 117 form a disordered region; the sequence is MNYGNNGGGQ…GGGNKNFGPI (117 aa).

This is an uncharacterized protein from Caenorhabditis elegans.